A 229-amino-acid polypeptide reads, in one-letter code: Non-structural protein P8 (229 aa).

Residues 14-26 (MKHNQDRVEELSL) are CCM-I. Residues 94-116 (IKRHVNEQILPKLKSDLSELKKK) are CCM-III. Transmembrane regions (helical) follow at residues 119 to 139 (IIHT…VCTL) and 162 to 182 (SLNP…MVCA). The tract at residues 185–198 (ERALNQQIDMIKKE) is CCM-II.

This sequence belongs to the orbivirus NS3 family. Forms homooligomers via coiled-coil motif. Interacts with host OPTN; this interaction inhibits innate immune response.

The protein resides in the host cell membrane. It is found in the host Golgi apparatus. In terms of biological role, plays a role in the inhibition of host innate immune response. Interacts with host OPTN and thus inhibits the recruitment of TBK1 to the host Golgi apparatus. In turn, downstream partner IRF3 cannot be activated and IFN-beta production is impaired. Facilitates viral particle release either by increasing plasma membrane permeability through a viroporin-like activity or by viral budding. The chain is Non-structural protein P8 (Segment-10) from Bluetongue virus 10 (isolate USA) (BTV 10).